The sequence spans 369 residues: Putative agmatine deiminase (369 aa).

The active-site Amidino-cysteine intermediate is Cys-361.

Belongs to the agmatine deiminase family.

It catalyses the reaction agmatine + H2O = N-carbamoylputrescine + NH4(+). This is Putative agmatine deiminase from Streptococcus mutans serotype c (strain ATCC 700610 / UA159).